The sequence spans 61 residues: Putative antitoxin RelB2 (61 aa).

Its function is as follows. Antitoxin component of a type II toxin-antitoxin (TA) system. Its cognate toxin is RelE2 (Potential). This chain is Putative antitoxin RelB2 (relB2), found in Methanocaldococcus jannaschii (strain ATCC 43067 / DSM 2661 / JAL-1 / JCM 10045 / NBRC 100440) (Methanococcus jannaschii).